Reading from the N-terminus, the 474-residue chain is Cysteine--tRNA ligase (474 aa).

Residue cysteine 28 coordinates Zn(2+). The 'HIGH' region motif lies at 30–40; it reads ITVYDLCHLGH. 3 residues coordinate Zn(2+): cysteine 209, histidine 234, and glutamate 238. Positions 269-273 match the 'KMSKS' region motif; it reads KMSKS. Lysine 272 provides a ligand contact to ATP.

It belongs to the class-I aminoacyl-tRNA synthetase family. Monomer. Requires Zn(2+) as cofactor.

Its subcellular location is the cytoplasm. The enzyme catalyses tRNA(Cys) + L-cysteine + ATP = L-cysteinyl-tRNA(Cys) + AMP + diphosphate. This chain is Cysteine--tRNA ligase, found in Blochmanniella floridana.